Here is a 245-residue protein sequence, read N- to C-terminus: U11/U12 small nuclear ribonucleoprotein 35 kDa protein (245 aa).

In terms of domain architecture, RRM spans 51 to 129 (LTLFVARLNL…HEIFVDYELE (79 aa)). The span at 146–162 (GKKESGQLRFGGRDRPF) shows a compositional bias: basic and acidic residues. A disordered region spans residues 146-165 (GKKESGQLRFGGRDRPFRKP). A Glycyl lysine isopeptide (Lys-Gly) (interchain with G-Cter in SUMO2) cross-link involves residue Lys-172. Residues 173–222 (NDQFREGKRERRERSRSRERHWDSRMRDHHDRGREKRWQEREPARAWPEG) are disordered. Composition is skewed to basic and acidic residues over residues 174–185 (DQFREGKRERRE) and 192–216 (RHWDSRMRDHHDRGREKRWQEREPA).

As to quaternary structure, component of the U11/U12 snRNPs that are part of the U12-type spliceosome.

It is found in the nucleus. The protein is U11/U12 small nuclear ribonucleoprotein 35 kDa protein (SNRNP35) of Bos taurus (Bovine).